The sequence spans 92 residues: MTEKRVHIIVSGLVQGVGFRMFVLREASARSLSGWTRNLPDGTVEVEAQGDSGRVDELIRQIRIGPSRSSVTSIKVKEIEVDTSCREFRILT.

In terms of domain architecture, Acylphosphatase-like spans 5-92 (RVHIIVSGLV…TSCREFRILT (88 aa)). Catalysis depends on residues arginine 20 and asparagine 38.

Belongs to the acylphosphatase family.

It catalyses the reaction an acyl phosphate + H2O = a carboxylate + phosphate + H(+). The chain is Acylphosphatase (acyP) from Chlorobaculum tepidum (strain ATCC 49652 / DSM 12025 / NBRC 103806 / TLS) (Chlorobium tepidum).